A 343-amino-acid polypeptide reads, in one-letter code: MGDCSIFTYTDNDFIGKVCCSGQQNRGRSRFDIALRSGWTEKRNTGLFRYRLDELETRILPGSRGYIAQLNIMRGTERRKPQEILSVRQNFDPKQFNFNKINPKELLFELKRESERKCSVIINVSPLEFGHCLLVPEPEKCFPQVLTHLAVQTGIETVLLSADPGFRVGFNSLGGFASVNHLHLHGYYLNHRLKIESSPAKLVLPNLNLYELVDFPSGFLFYTQGPNLDLVVKAICSLTDVLVDHNIAHNLFLTRGCPPQMEPDTSSSRNGVRVIVWPRLSCFGAKEESAFNVALCELAGHLPFKNRQDYESATEETVQDIIQKYLLPQEETAQLKEHLMKCL.

His183 serves as the catalytic Tele-GMP-histidine intermediate.

It belongs to the GDPGP1 family.

It is found in the cytoplasm. The enzyme catalyses GDP-alpha-D-glucose + phosphate = alpha-D-glucose 1-phosphate + GDP + H(+). Its function is as follows. Specific and highly efficient GDP-D-glucose phosphorylase regulating the levels of GDP-D-glucose in cells. This is GDP-D-glucose phosphorylase 1 (gdpgp1) from Danio rerio (Zebrafish).